A 158-amino-acid polypeptide reads, in one-letter code: MQGRLSAWLVKHGLVHRSLGFDYQGIETLQIKPEEWHSIAVILYVYGYNYLRSQCAYDVAPGGLLASVYHLTRIEYGVDQAEEVCIKVFAPRNNPRIPSVFWVWKSADFQERESYDMLGIRYDNHPRLKRILMPESWIGWPLRKDYIAPNFYEIQDAH.

Belongs to the complex I 30 kDa subunit family. NDH is composed of at least 16 different subunits, 5 of which are encoded in the nucleus.

It is found in the plastid. Its subcellular location is the chloroplast thylakoid membrane. It carries out the reaction a plastoquinone + NADH + (n+1) H(+)(in) = a plastoquinol + NAD(+) + n H(+)(out). It catalyses the reaction a plastoquinone + NADPH + (n+1) H(+)(in) = a plastoquinol + NADP(+) + n H(+)(out). Its function is as follows. NDH shuttles electrons from NAD(P)H:plastoquinone, via FMN and iron-sulfur (Fe-S) centers, to quinones in the photosynthetic chain and possibly in a chloroplast respiratory chain. The immediate electron acceptor for the enzyme in this species is believed to be plastoquinone. Couples the redox reaction to proton translocation, and thus conserves the redox energy in a proton gradient. This chain is NAD(P)H-quinone oxidoreductase subunit J, chloroplastic, found in Oenothera argillicola (Appalachian evening primrose).